We begin with the raw amino-acid sequence, 154 residues long: Myoglobin (154 aa).

Positions 2-148 (GLSDEEWKKV…FRNDMASRYK (147 aa)) constitute a Globin domain. His65 provides a ligand contact to nitrite. His65 provides a ligand contact to O2. His94 provides a ligand contact to heme b.

Belongs to the globin family. Monomeric.

Its subcellular location is the cytoplasm. It is found in the sarcoplasm. It carries out the reaction Fe(III)-heme b-[protein] + nitric oxide + H2O = Fe(II)-heme b-[protein] + nitrite + 2 H(+). It catalyses the reaction H2O2 + AH2 = A + 2 H2O. Functionally, monomeric heme protein which primary function is to store oxygen and facilitate its diffusion within muscle tissues. Reversibly binds oxygen through a pentacoordinated heme iron and enables its timely and efficient release as needed during periods of heightened demand. Depending on the oxidative conditions of tissues and cells, and in addition to its ability to bind oxygen, it also has a nitrite reductase activity whereby it regulates the production of bioactive nitric oxide. Under stress conditions, like hypoxia and anoxia, it also protects cells against reactive oxygen species thanks to its pseudoperoxidase activity. This chain is Myoglobin (MB), found in Varanus varius (Lace monitor lizard).